A 351-amino-acid chain; its full sequence is Prohormone-2 (351 aa).

The N-terminal stretch at 1–21 (MMCDWVWLLLTLCSLLMIVQS) is a signal peptide. 2 propeptides span residues 22-177 (LPTN…QTQV) and 192-319 (ELDI…MISR). Over residues 51–69 (GNQQNHQPENNPSSSYSST) the composition is skewed to polar residues. 2 disordered regions span residues 51 to 71 (GNQQNHQPENNPSSSYSSTAE) and 136 to 176 (NEDR…VQTQ). A compositionally biased stretch (basic and acidic residues) spans 136–145 (NEDRRKRSEK). The segment covering 158 to 176 (PSTTSFQSPTSTQQSVQTQ) has biased composition (low complexity).

It is found in the secreted. The sequence is that of Prohormone-2 from Apis mellifera (Honeybee).